A 314-amino-acid polypeptide reads, in one-letter code: tRNA dimethylallyltransferase (314 aa).

ATP is bound at residue Gly-13 to Ser-20. Residue Thr-15–Ser-20 coordinates substrate. Interaction with substrate tRNA stretches follow at residues Asp-38–Gln-41 and Gln-161–Arg-165.

The protein belongs to the IPP transferase family. Monomer. It depends on Mg(2+) as a cofactor.

The catalysed reaction is adenosine(37) in tRNA + dimethylallyl diphosphate = N(6)-dimethylallyladenosine(37) in tRNA + diphosphate. In terms of biological role, catalyzes the transfer of a dimethylallyl group onto the adenine at position 37 in tRNAs that read codons beginning with uridine, leading to the formation of N6-(dimethylallyl)adenosine (i(6)A). The protein is tRNA dimethylallyltransferase of Parvibaculum lavamentivorans (strain DS-1 / DSM 13023 / NCIMB 13966).